We begin with the raw amino-acid sequence, 447 residues long: UDP-glycosyltransferase 76E3 (447 aa).

UDP-alpha-D-glucose contacts are provided by residues Ser269, 328-330 (APQ), 345-353 (HCGWNSTLE), and 367-370 (QGEQ).

The protein belongs to the UDP-glycosyltransferase family.

This is UDP-glycosyltransferase 76E3 (UGT76E3) from Arabidopsis thaliana (Mouse-ear cress).